We begin with the raw amino-acid sequence, 357 residues long: Transcription factor PCF6 (357 aa).

The interval 1–29 is disordered; sequence MEAAVGDGEGGGGGGGRGKRGRGGGGGEM. Gly residues predominate over residues 7-16; the sequence is DGEGGGGGGG. In terms of domain architecture, TCP spans 52–110; sequence GKDRHSKVYTAKGIRDRRVRLSVATAIQFYDLQDRLGFDQPSKAIEWLINAASPAIDTL. 2 disordered regions span residues 125-162 and 281-307; these read AADA…DKEV and ANRG…QQLQ. Composition is skewed to polar residues over residues 142–155 and 284–295; these read LSNK…SETS and GTLQSNSPSNMS.

As to quaternary structure, forms homodimers and heterodimers.

The protein localises to the nucleus. Transcription activator. Binds the promoter core sequence 5'-GGNCC-3'. This chain is Transcription factor PCF6 (PCF6), found in Oryza sativa subsp. japonica (Rice).